The primary structure comprises 269 residues: Ice-binding protein (269 aa).

The N-terminal stretch at 1–24 (MLKINRKYAIILAIVAFSSFQTEA) is a signal peptide. Short sequence motifs (probable ice-binding motif (T/S-X-T)) lie at residues 45–47 (TVT), 65–67 (SAT), 128–130 (SAQ), 154–156 (TLT), 180–182 (SAT), 198–200 (SIT), and 218–220 (AVT). The interval 240-263 (VPEPDSSLAVLGSGLVSLLFAFRK) is PEP C-terminal anchor. The helical transmembrane segment at 245–261 (SSLAVLGSGLVSLLFAF) threads the bilayer.

This sequence belongs to the ice-binding protein family.

The protein localises to the cell outer membrane. Its function is as follows. A probable ice-binding protein that has ice-structuring activities in vitro. Thought not to anchor the cyanobacterium to ice surfaces, as its habitat is shallow puddles fed by glacier meltwater. This chain is Ice-binding protein, found in Nostoc sp. (strain HG1).